A 123-amino-acid polypeptide reads, in one-letter code: Small ribosomal subunit protein uS12 (123 aa).

Aspartate 89 is subject to 3-methylthioaspartic acid. Residues glycine 100–lysine 123 are disordered. Residues glycine 113–lysine 123 show a composition bias toward basic residues.

Belongs to the universal ribosomal protein uS12 family. As to quaternary structure, part of the 30S ribosomal subunit. Contacts proteins S8 and S17. May interact with IF1 in the 30S initiation complex.

With S4 and S5 plays an important role in translational accuracy. Functionally, interacts with and stabilizes bases of the 16S rRNA that are involved in tRNA selection in the A site and with the mRNA backbone. Located at the interface of the 30S and 50S subunits, it traverses the body of the 30S subunit contacting proteins on the other side and probably holding the rRNA structure together. The combined cluster of proteins S8, S12 and S17 appears to hold together the shoulder and platform of the 30S subunit. The sequence is that of Small ribosomal subunit protein uS12 from Saccharophagus degradans (strain 2-40 / ATCC 43961 / DSM 17024).